A 233-amino-acid polypeptide reads, in one-letter code: uncharacterized protein (233 aa).

3 consecutive transmembrane segments (helical) span residues 4–24 (LAILLSILAIGLILLIINHDT), 35–55 (FGQLVSLGAIATLIGAGILQS), and 66–86 (IAIWLFVVLALVSAYVYRFEL).

Its subcellular location is the cell membrane. This is an uncharacterized protein from Sinorhizobium sp.